Consider the following 544-residue polypeptide: Lysophosphatidylcholine acyltransferase 2 (544 aa).

At Met-1–Met-58 the chain is on the cytoplasmic side. Residues Phe-59–Leu-79 traverse the membrane as a helical; Signal-anchor for type II membrane protein segment. Topologically, residues Ala-80–Asp-544 are lumenal. Positions His-146–Asp-151 match the HXXXXD motif motif. The EGTC motif signature appears at Glu-220–Cys-223. 2 consecutive EF-hand domains span residues Pro-391–Pro-426 and Asn-428–Val-463. Asp-404, Asn-406, Asp-408, Ser-410, Glu-415, Asp-441, Asp-443, Asp-445, Tyr-447, and Glu-452 together coordinate Ca(2+). Residues Thr-520–Glu-532 are compositionally biased toward polar residues. The interval Thr-520–Asp-544 is disordered.

The protein belongs to the 1-acyl-sn-glycerol-3-phosphate acyltransferase family. Highest expression is found in resident macrophages and casein-induced neutrophils followed by skin, colon, spleen and thioglycollate-induced macrophages. Detected in erythroleukemic cells but not in reticulocytes.

It localises to the endoplasmic reticulum membrane. Its subcellular location is the golgi apparatus membrane. The protein resides in the cell membrane. It is found in the lipid droplet. It catalyses the reaction a 1-acyl-sn-glycero-3-phosphocholine + an acyl-CoA = a 1,2-diacyl-sn-glycero-3-phosphocholine + CoA. It carries out the reaction a 1-O-alkyl-sn-glycero-3-phosphocholine + acetyl-CoA = a 1-O-alkyl-2-acetyl-sn-glycero-3-phosphocholine + CoA. The catalysed reaction is a 1-acyl-sn-glycero-3-phosphate + an acyl-CoA = a 1,2-diacyl-sn-glycero-3-phosphate + CoA. The enzyme catalyses a 1-O-(1Z-alkenyl)-sn-glycero-3-phosphocholine + an acyl-CoA = a 1-O-(1Z-alkenyl)-2-acyl-sn-glycero-3-phosphocholine + CoA. It catalyses the reaction 1-O-octadecyl-sn-glycero-3-phosphocholine + acetyl-CoA = 1-O-octadecyl-2-acetyl-sn-glycero-3-phosphocholine + CoA. It carries out the reaction 1-hexadecanoyl-sn-glycero-3-phosphocholine + acetyl-CoA = 1-hexadecanoyl-2-acetyl-sn-glycero-3-phosphocholine + CoA. The catalysed reaction is 1-octadecanoyl-sn-glycero-3-phosphocholine + acetyl-CoA = 1-octadecanoyl-2-acetyl-sn-glycero-3-phosphocholine + CoA. The enzyme catalyses a 1-O-(1Z-alkenyl)-sn-glycero-3-phosphocholine + acetyl-CoA = 1-O-(1Z)-alkenyl-2-acetyl-sn-glycero-3-phosphocholine + CoA. It catalyses the reaction 1-O-hexadecyl-sn-glycero-3-phosphocholine + acetyl-CoA = 1-O-hexadecyl-2-acetyl-sn-glycero-3-phosphocholine + CoA. It carries out the reaction 1-O-octadecyl-sn-glycero-3-phosphocholine + (5Z,8Z,11Z,14Z)-eicosatetraenoyl-CoA = 1-O-octadecyl-2-(5Z,8Z,11Z,14Z)-eicosatetraenoyl-sn-glycero-3-phosphocholine + CoA. The catalysed reaction is 1-hexadecanoyl-sn-glycero-3-phosphate + (9Z)-octadecenoyl-CoA = 1-hexadecanoyl-2-(9Z-octadecenoyl)-sn-glycero-3-phosphate + CoA. The enzyme catalyses 1-(9Z-octadecenoyl)-sn-glycero-3-phosphate + (9Z)-octadecenoyl-CoA = 1,2-di-(9Z-octadecenoyl)-sn-glycero-3-phosphate + CoA. It catalyses the reaction 1-(9Z-octadecenoyl)-sn-glycero-3-phosphate + hexadecanoyl-CoA = 1-(9Z)-octadecenoyl-2-hexadecanoyl-sn-glycero-3-phosphate + CoA. It carries out the reaction 1-heptadecanoyl-sn-glycero-3-phosphate + (9Z)-octadecenoyl-CoA = 1-heptadecanoyl-2-(9Z)-octadecenoyl-sn-glycero-3-phosphate + CoA. The catalysed reaction is 1-octadecanoyl-sn-glycero-3-phosphate + (9Z)-octadecenoyl-CoA = 1-octadecanoyl-2-(9Z-octadecenoyl)-sn-glycero-3-phosphate + CoA. The enzyme catalyses heptadecanoyl-CoA + 1-(9Z-octadecenoyl)-sn-glycero-3-phosphate = 1-(9Z)-octadecenoyl-2-heptadecanoyl-sn-glycero-3-phosphate + CoA. It catalyses the reaction 1-(9Z-octadecenoyl)-sn-glycero-3-phosphate + (9Z,12Z)-octadecadienoyl-CoA = 1-(9Z)-octadecenoyl-2-(9Z,12Z)-octadecadienoyl-sn-glycero-3-phosphate + CoA. It carries out the reaction 1-(9Z-octadecenoyl)-sn-glycero-3-phosphate + tetradecanoyl-CoA = 1-(9Z)-octadecenoyl-2-tetradecanoyl-sn-glycero-3-phosphate + CoA. The catalysed reaction is pentadecanoyl-CoA + 1-(9Z-octadecenoyl)-sn-glycero-3-phosphate = 1-(9Z)-octadecenoyl-2-pentadecanoyl-sn-glycero-3-phosphate + CoA. The enzyme catalyses nonadecanoyl-CoA + 1-(9Z-octadecenoyl)-sn-glycero-3-phosphate = 1-(9Z)-octadecenoyl-2-nonadecanoyl-sn-glycero-3-phosphate + CoA. It catalyses the reaction 1-hexadecanoyl-sn-glycero-3-phosphocholine + (9Z)-octadecenoyl-CoA = 1-hexadecanoyl-2-(9Z-octadecenoyl)-sn-glycero-3-phosphocholine + CoA. It participates in lipid metabolism; phospholipid metabolism. Acetyltransferase activity is increased following acute inflammatory stimulation by lipopolysaccharide (LPS). Acyltransferase activity is unchanged. Its function is as follows. Exhibits both acyltransferase and acetyltransferase activities. Activity is calcium-dependent. Catalyzes the conversion of lysophosphatidylcholine (1-acyl-sn-glycero-3-phosphocholine or LPC) into phosphatidylcholine (1,2-diacyl-sn-glycero-3-phosphocholine or PC). Catalyzes the conversion 1-acyl-sn-glycerol-3-phosphate (lysophosphatidic acid or LPA) into 1,2-diacyl-sn-glycerol-3-phosphate (phosphatidic acid or PA) by incorporating an acyl moiety at the sn-2 position of the glycerol backbone. Involved in platelet-activating factor (PAF) biosynthesis by catalyzing the conversion of the PAF precursor, 1-O-alkyl-sn-glycero-3-phosphocholine (lyso-PAF) into 1-O-alkyl-2-acetyl-sn-glycero-3-phosphocholine (PAF). Also converts lyso-PAF to 1-O-alkyl-2-acyl-sn-glycero-3-phosphocholine (PC), a major component of cell membranes and a PAF precursor. Under resting conditions, acyltransferase activity is preferred. Upon acute inflammatory stimulus, acetyltransferase activity is enhanced and PAF synthesis increases. Involved in the regulation of lipid droplet number and size. The protein is Lysophosphatidylcholine acyltransferase 2 (Lpcat2) of Mus musculus (Mouse).